We begin with the raw amino-acid sequence, 240 residues long: UDP-2,3-diacylglucosamine hydrolase (240 aa).

Mn(2+)-binding residues include Asp8, His10, Asp41, Asn79, and His114. Residue 79-80 (NR) coordinates substrate. 5 residues coordinate substrate: Asp122, Ser160, Asn164, Lys167, and His195. His195 and His197 together coordinate Mn(2+).

The protein belongs to the LpxH family. Requires Mn(2+) as cofactor.

The protein localises to the cell inner membrane. The catalysed reaction is UDP-2-N,3-O-bis[(3R)-3-hydroxytetradecanoyl]-alpha-D-glucosamine + H2O = 2-N,3-O-bis[(3R)-3-hydroxytetradecanoyl]-alpha-D-glucosaminyl 1-phosphate + UMP + 2 H(+). The protein operates within glycolipid biosynthesis; lipid IV(A) biosynthesis; lipid IV(A) from (3R)-3-hydroxytetradecanoyl-[acyl-carrier-protein] and UDP-N-acetyl-alpha-D-glucosamine: step 4/6. Its function is as follows. Hydrolyzes the pyrophosphate bond of UDP-2,3-diacylglucosamine to yield 2,3-diacylglucosamine 1-phosphate (lipid X) and UMP by catalyzing the attack of water at the alpha-P atom. Involved in the biosynthesis of lipid A, a phosphorylated glycolipid that anchors the lipopolysaccharide to the outer membrane of the cell. The polypeptide is UDP-2,3-diacylglucosamine hydrolase (Proteus mirabilis (strain HI4320)).